The following is a 109-amino-acid chain: MEVKAIVKDTGYSALKVRLCVDLVRGKKVSEAITLLRFMTSPTAKVVSKVIKSAAANAENNFQMNPADLKISQIYADEARMLKRMRPQARGRVSPILKRSSHITVVVAD.

Belongs to the universal ribosomal protein uL22 family. As to quaternary structure, part of the 50S ribosomal subunit.

This protein binds specifically to 23S rRNA; its binding is stimulated by other ribosomal proteins, e.g. L4, L17, and L20. It is important during the early stages of 50S assembly. It makes multiple contacts with different domains of the 23S rRNA in the assembled 50S subunit and ribosome. Functionally, the globular domain of the protein is located near the polypeptide exit tunnel on the outside of the subunit, while an extended beta-hairpin is found that lines the wall of the exit tunnel in the center of the 70S ribosome. The sequence is that of Large ribosomal subunit protein uL22 from Dehalococcoides mccartyi (strain ATCC BAA-2100 / JCM 16839 / KCTC 5957 / BAV1).